The following is a 193-amino-acid chain: uncharacterized protein (193 aa).

An N-terminal signal peptide occupies residues 1–14 (MSTSLLFSLSPSSS).

This is an uncharacterized protein from Saccharomyces cerevisiae (strain ATCC 204508 / S288c) (Baker's yeast).